An 878-amino-acid polypeptide reads, in one-letter code: RNA-directed RNA polymerase (878 aa).

258–265 serves as a coordination point for GTP; that stretch reads GLPYVGRT. The RdRp catalytic domain occupies 397-597; it reads LVYADNIYIV…DKERLFCSAA (201 aa). The segment at 845–878 is disordered; it reads GAGTSRPMGMEAPTRSKNAVKMAKRAQRQKESRQ.

As to quaternary structure, interacts with VP3 in the cytoplasm. Post-translationally, may exist in multiple phosphorylated forms.

Its subcellular location is the virion. It carries out the reaction RNA(n) + a ribonucleoside 5'-triphosphate = RNA(n+1) + diphosphate. In terms of biological role, RNA-dependent RNA polymerase which is found both free and covalently attached to the genomic RNA. May also contain guanylyl and methyl transferase activities. This is RNA-directed RNA polymerase (VP1) from Gallus gallus (Chicken).